The primary structure comprises 356 residues: MNNSSINEWPSLLQQLLDGQSLSSSQASNLMQGWLQEEIPPVLSGAILAALQAKGVSAQELAGMAKVLQSLSLTKEYHNNNIPITNFQYPIIDTCGTGGDGASTFNISTAVAFVLAAAGVPVAKHGNRSASGKVGSADVLEALGIRLNAPTEKVISALSEVGITFLFAPGWHPAMKCVVPLRRTLKVRTVFNLLGPLVNPLRPQAQIIGVYNSTLVKTVAQALGILGVEYAIALHGREKLDEAGLGDITDIAILSHGEVKATSINPQYLGLNYAPISTLQGGDVEQNAEILKNVLQGKGTSQQTDVVALNSSLALQVAGVVPLEAHQEGIGKAKDILQSGAAWLKLEQLVQFLSIF.

Residues glycine 96, 99–100 (GD), threonine 104, 106–109 (NIST), 124–132 (KHGNRSASG), and serine 136 contribute to the 5-phospho-alpha-D-ribose 1-diphosphate site. An anthranilate-binding site is contributed by glycine 96. Residue serine 108 participates in Mg(2+) binding. Asparagine 127 lines the anthranilate pocket. Arginine 182 serves as a coordination point for anthranilate. Residues aspartate 241 and glutamate 242 each coordinate Mg(2+).

Belongs to the anthranilate phosphoribosyltransferase family. Homodimer. It depends on Mg(2+) as a cofactor.

It catalyses the reaction N-(5-phospho-beta-D-ribosyl)anthranilate + diphosphate = 5-phospho-alpha-D-ribose 1-diphosphate + anthranilate. It functions in the pathway amino-acid biosynthesis; L-tryptophan biosynthesis; L-tryptophan from chorismate: step 2/5. Functionally, catalyzes the transfer of the phosphoribosyl group of 5-phosphorylribose-1-pyrophosphate (PRPP) to anthranilate to yield N-(5'-phosphoribosyl)-anthranilate (PRA). In Trichodesmium erythraeum (strain IMS101), this protein is Anthranilate phosphoribosyltransferase.